Here is a 378-residue protein sequence, read N- to C-terminus: Formate dehydrogenase 2, mitochondrial (378 aa).

Residues 1-18 constitute a mitochondrion transit peptide; it reads MAMWRAPSAAGQLLGRAL. Substrate contacts are provided by valine 122 and asparagine 146. NAD(+) contacts are provided by residues threonine 147, 201-202, aspartate 221, 256-260, asparagine 282, aspartate 308, and 332-335; these read RI, PLTEK, and HCSG.

It belongs to the D-isomer specific 2-hydroxyacid dehydrogenase family. FDH subfamily. As to quaternary structure, homodimer.

It is found in the mitochondrion. It carries out the reaction formate + NAD(+) = CO2 + NADH. In terms of biological role, catalyzes the NAD(+)-dependent oxidation of formate to carbon dioxide. Involved in the cell stress response. The protein is Formate dehydrogenase 2, mitochondrial of Oryza sativa subsp. japonica (Rice).